The primary structure comprises 148 residues: D-aminoacyl-tRNA deacylase (148 aa).

A Gly-cisPro motif, important for rejection of L-amino acids motif is present at residues 137–138 (GP).

It belongs to the DTD family. As to quaternary structure, homodimer.

The protein localises to the cytoplasm. It catalyses the reaction glycyl-tRNA(Ala) + H2O = tRNA(Ala) + glycine + H(+). It carries out the reaction a D-aminoacyl-tRNA + H2O = a tRNA + a D-alpha-amino acid + H(+). Its function is as follows. An aminoacyl-tRNA editing enzyme that deacylates mischarged D-aminoacyl-tRNAs. Also deacylates mischarged glycyl-tRNA(Ala), protecting cells against glycine mischarging by AlaRS. Acts via tRNA-based rather than protein-based catalysis; rejects L-amino acids rather than detecting D-amino acids in the active site. By recycling D-aminoacyl-tRNA to D-amino acids and free tRNA molecules, this enzyme counteracts the toxicity associated with the formation of D-aminoacyl-tRNA entities in vivo and helps enforce protein L-homochirality. This is D-aminoacyl-tRNA deacylase from Aquifex aeolicus (strain VF5).